We begin with the raw amino-acid sequence, 328 residues long: Phosphate acyltransferase (328 aa).

The protein belongs to the PlsX family. In terms of assembly, homodimer. Probably interacts with PlsY.

The protein resides in the cytoplasm. It catalyses the reaction a fatty acyl-[ACP] + phosphate = an acyl phosphate + holo-[ACP]. It participates in lipid metabolism; phospholipid metabolism. Catalyzes the reversible formation of acyl-phosphate (acyl-PO(4)) from acyl-[acyl-carrier-protein] (acyl-ACP). This enzyme utilizes acyl-ACP as fatty acyl donor, but not acyl-CoA. This chain is Phosphate acyltransferase, found in Staphylococcus aureus (strain bovine RF122 / ET3-1).